We begin with the raw amino-acid sequence, 130 residues long: Ribosome-binding factor A (130 aa).

Positions Arg111–Arg130 are disordered.

This sequence belongs to the RbfA family. As to quaternary structure, monomer. Binds 30S ribosomal subunits, but not 50S ribosomal subunits or 70S ribosomes.

Its subcellular location is the cytoplasm. Its function is as follows. One of several proteins that assist in the late maturation steps of the functional core of the 30S ribosomal subunit. Associates with free 30S ribosomal subunits (but not with 30S subunits that are part of 70S ribosomes or polysomes). Required for efficient processing of 16S rRNA. May interact with the 5'-terminal helix region of 16S rRNA. The chain is Ribosome-binding factor A from Xanthomonas axonopodis pv. citri (strain 306).